A 194-amino-acid polypeptide reads, in one-letter code: Cyclin-dependent kinase inhibitor 4 (194 aa).

Positions 49–58 (LELRSRRLEK) are enriched in basic and acidic residues. Disordered regions lie at residues 49–70 (LELR…PRRR) and 107–139 (TRET…SHCK).

This sequence belongs to the CDI family. ICK/KRP subfamily.

The sequence is that of Cyclin-dependent kinase inhibitor 4 (KRP4) from Oryza sativa subsp. japonica (Rice).